A 643-amino-acid polypeptide reads, in one-letter code: Aspartic protease 3 (643 aa).

The signal sequence occupies residues 1–31 (MEGRTTAGRATPAGFWLFSCCLASVLWSANA). The segment covering 87–99 (APEVSGAAGASAS) has biased composition (low complexity). The disordered stretch occupies residues 87 to 116 (APEVSGAAGASASKTSEKPIRPYHTGPSSR). One can recognise a Peptidase A1 domain in the interval 281–600 (YVGVIGIGTP…GTRPSLVGIA (320 aa)). Active-site residues include Asp-299 and Asp-490.

Belongs to the peptidase A1 family.

The protein resides in the endomembrane system. Its activity is regulated as follows. Inhibited by 49c, a hydroxyethylamine scaffold-based compound. Required for the processing-mediated maturation of a subset of microneme proteins, such as MIC6, and rhoptry proteins, such as ROP1. By regulating microneme and rhoptry processing, plays an essential role in the lysis of the host cell membrane during egress and in rhoptry content discharge, which is required for invasion of host cells. The protein is Aspartic protease 3 of Toxoplasma gondii.